Reading from the N-terminus, the 503-residue chain is Maturase K (503 aa).

Belongs to the intron maturase 2 family. MatK subfamily.

The protein localises to the plastid. It is found in the chloroplast. Usually encoded in the trnK tRNA gene intron. Probably assists in splicing its own and other chloroplast group II introns. The polypeptide is Maturase K (Rosa californica (California wild rose)).